The primary structure comprises 442 residues: Microfibrillar-associated protein 1 (442 aa).

2 disordered regions span residues 1-34 (MSAPSALVKQPPIQSTAGACPSRNEKGRAVYGEG) and 113-203 (EVVS…PRLK). Composition is skewed to acidic residues over residues 134 to 148 (DTSEEEEEEIDDEEI) and 181 to 198 (ESELESEYEEYTDSEDEM).

It belongs to the MFAP1 family. As to quaternary structure, component of the spliceosome B complex. Interacts with PRPF38A (via N-terminal interaction domain). In terms of tissue distribution, widely expressed.

The protein resides in the nucleus. In terms of biological role, involved in pre-mRNA splicing as a component of the spliceosome. The protein is Microfibrillar-associated protein 1 of Gallus gallus (Chicken).